The primary structure comprises 407 residues: Imidazolonepropionase (407 aa).

Residues H68 and H70 each coordinate Fe(3+). Residues H68 and H70 each contribute to the Zn(2+) site. 4-imidazolone-5-propanoate-binding residues include R77, Y140, and H173. Y140 contributes to the N-formimidoyl-L-glutamate binding site. H238 contacts Fe(3+). H238 is a binding site for Zn(2+). Q241 contacts 4-imidazolone-5-propanoate. A Fe(3+)-binding site is contributed by D313. A Zn(2+)-binding site is contributed by D313. N-formimidoyl-L-glutamate contacts are provided by N315 and G317. T318 lines the 4-imidazolone-5-propanoate pocket.

Belongs to the metallo-dependent hydrolases superfamily. HutI family. It depends on Zn(2+) as a cofactor. The cofactor is Fe(3+).

The protein resides in the cytoplasm. The enzyme catalyses 4-imidazolone-5-propanoate + H2O = N-formimidoyl-L-glutamate. The protein operates within amino-acid degradation; L-histidine degradation into L-glutamate; N-formimidoyl-L-glutamate from L-histidine: step 3/3. In terms of biological role, catalyzes the hydrolytic cleavage of the carbon-nitrogen bond in imidazolone-5-propanoate to yield N-formimidoyl-L-glutamate. It is the third step in the universal histidine degradation pathway. In Burkholderia ambifaria (strain MC40-6), this protein is Imidazolonepropionase.